Reading from the N-terminus, the 192-residue chain is dTDP-4-amino-4,6-dideoxy-D-glucose acyltransferase (192 aa).

It belongs to the transferase hexapeptide repeat family.

It catalyses the reaction dTDP-4-amino-4,6-dideoxy-alpha-D-glucose + acetyl-CoA = dTDP-4-acetamido-4,6-dideoxy-alpha-D-glucose + CoA + H(+). It functions in the pathway bacterial outer membrane biogenesis; lipopolysaccharide biosynthesis. Its function is as follows. Catalyzes the conversion of dTDP-4-amino-4,6-dideoxy-D-glucose (dTDP-D-Qui4N) to dTDP-4-acetamido-4,6-dideoxy-D-glucose (dTDP-D-Qui4NAc). This Escherichia coli protein is dTDP-4-amino-4,6-dideoxy-D-glucose acyltransferase (vioB).